The following is a 172-amino-acid chain: Transcriptional repressor NrdR (172 aa).

A zinc finger lies at 3 to 34; it reads CPFCGAPDTRVIDSRLAGEGDQVRRRRECLSC. The ATP-cone domain occupies 49–139; that stretch reads PRVVKRDGSR…VYLSFADVQA (91 aa).

It belongs to the NrdR family. Zn(2+) serves as cofactor.

In terms of biological role, negatively regulates transcription of bacterial ribonucleotide reductase nrd genes and operons by binding to NrdR-boxes. This chain is Transcriptional repressor NrdR, found in Thioalkalivibrio sulfidiphilus (strain HL-EbGR7).